The chain runs to 615 residues: MIQALLVTICLVGFPHQGSSIILESGNVKDYEVVYPQKIPALPKGGIQRAEPETKYEDTMQYQFKVNGEPVVLHLERNKGLFSEDYSETHYSPDGREITTSPPVQDHCYYHGRIQNDADSTASISACNGLKGRFKHQGETYLIEPLKISDSEAHKIYKSENLEKEDEAPKTCGVTQTSLETDETIKMNFQSANNPEEDYVRKRKYIKLAVVVDNSMYIKYDRNLNDIRSRIYEIVNDVNVFYRLLNIHIALIFIEIWSHQDKINVQPMVRVTLDSFGTWRETDLLPRRSHDNAQLYTNVDFDGPTVGYAYVGSLCKPKHSVAIIQDHTETANMMASTVAHELGHNLGMNHDSGNCICQPTLCVMSETLSSVPFNDFSACSRVDHRNYLIRDLPQCILNKPLRTDIVAPAVCGNNFVEVGGECDCGSPQDCQSTCCDAATCRLRDGAQCDTEECCEQCRFRRAGTVCRAAKDDCDVAEFCTGRTADCPMDGLQRNGEPCQHNQGYCYNGKCPIMTNQCIALWGPDATVSQDGCFHFNENGQGDLYCRRENGVNIQCEPQDNKCGRLFCVQSTSTVQCNYRSSATDPDYGMVAIGTKCGDGRVCNNNRFCVDIRIAY.

The N-terminal stretch at 1–20 is a signal peptide; that stretch reads MIQALLVTICLVGFPHQGSS. A propeptide spanning residues 21 to 195 is cleaved from the precursor; the sequence is IILESGNVKD…KMNFQSANNP (175 aa). The Peptidase M12B domain maps to 204-400; that stretch reads KYIKLAVVVD…DLPQCILNKP (197 aa). 3 disulfide bridges follow: Cys315-Cys395, Cys355-Cys379, and Cys357-Cys362. His340 serves as a coordination point for Zn(2+). The active site involves Glu341. Positions 344 and 350 each coordinate Zn(2+). One can recognise a Disintegrin domain in the interval 408–494; it reads PAVCGNNFVE…DCPMDGLQRN (87 aa). Ca(2+) is bound by residues Val410, Asn413, Phe415, Glu417, and Asp423. 14 disulfide bridges follow: Cys411–Cys440, Cys422–Cys435, Cys424–Cys430, Cys434–Cys457, Cys448–Cys454, Cys453–Cys479, Cys466–Cys486, Cys473–Cys505, Cys498–Cys510, Cys517–Cys567, Cys532–Cys576, Cys545–Cys555, Cys562–Cys602, and Cys596–Cys608. Residues 472–474 carry the D/ECD-tripeptide motif; the sequence is DCD.

The protein belongs to the venom metalloproteinase (M12B) family. P-III subfamily. P-IIIa sub-subfamily. As to quaternary structure, monomer. Zn(2+) serves as cofactor. In terms of tissue distribution, expressed by the venom gland.

It is found in the secreted. Functionally, snake venom zinc metalloprotease that may induce platelet aggregation. The protein is Zinc metalloproteinase-disintegrin-like of Cerberus rynchops (Dog-faced water snake).